A 169-amino-acid polypeptide reads, in one-letter code: X polypeptide (169 aa).

Belongs to the IagB/IpgF/P19 family.

The sequence is that of X polypeptide (yubQ) from Escherichia coli (strain K12).